The following is a 492-amino-acid chain: Catalase-2 (492 aa).

Active-site residues include histidine 65 and asparagine 138. Tyrosine 348 serves as a coordination point for heme.

Belongs to the catalase family. Homotetramer and heterotetramer. At least six or seven isozymes are produced from a mixture of 3 gene products. Interacts with NCA1. Interacts with LSD1. Heme serves as cofactor.

The protein localises to the cytoplasm. It is found in the cytosol. It localises to the peroxisome matrix. The catalysed reaction is 2 H2O2 = O2 + 2 H2O. Functionally, catalyzes the degradation of hydrogen peroxide (H(2)O(2)) generated by peroxisomal oxidases to water and oxygen, thereby protecting cells from the toxic effects of hydrogen peroxide. This Arabidopsis thaliana (Mouse-ear cress) protein is Catalase-2 (CAT2).